Reading from the N-terminus, the 472-residue chain is 3-isopropylmalate dehydratase large subunit (472 aa).

Residues cysteine 352, cysteine 412, and cysteine 415 each contribute to the [4Fe-4S] cluster site.

This sequence belongs to the aconitase/IPM isomerase family. LeuC type 1 subfamily. Heterodimer of LeuC and LeuD. [4Fe-4S] cluster is required as a cofactor.

It catalyses the reaction (2R,3S)-3-isopropylmalate = (2S)-2-isopropylmalate. It functions in the pathway amino-acid biosynthesis; L-leucine biosynthesis; L-leucine from 3-methyl-2-oxobutanoate: step 2/4. Functionally, catalyzes the isomerization between 2-isopropylmalate and 3-isopropylmalate, via the formation of 2-isopropylmaleate. The protein is 3-isopropylmalate dehydratase large subunit of Roseiflexus castenholzii (strain DSM 13941 / HLO8).